The following is a 100-amino-acid chain: NADH-quinone oxidoreductase subunit K (100 aa).

Helical transmembrane passes span 4–24, 29–49, and 60–80; these read LQHG…GLII, LFML…FVVV, and VMFI…LALL.

The protein belongs to the complex I subunit 4L family. In terms of assembly, NDH-1 is composed of 13 different subunits. Subunits NuoA, H, J, K, L, M, N constitute the membrane sector of the complex.

The protein resides in the cell inner membrane. The enzyme catalyses a quinone + NADH + 5 H(+)(in) = a quinol + NAD(+) + 4 H(+)(out). Functionally, NDH-1 shuttles electrons from NADH, via FMN and iron-sulfur (Fe-S) centers, to quinones in the respiratory chain. The immediate electron acceptor for the enzyme in this species is believed to be ubiquinone. Couples the redox reaction to proton translocation (for every two electrons transferred, four hydrogen ions are translocated across the cytoplasmic membrane), and thus conserves the redox energy in a proton gradient. This Photorhabdus laumondii subsp. laumondii (strain DSM 15139 / CIP 105565 / TT01) (Photorhabdus luminescens subsp. laumondii) protein is NADH-quinone oxidoreductase subunit K.